Here is a 157-residue protein sequence, read N- to C-terminus: Small ribosomal subunit protein uS7 (157 aa).

This sequence belongs to the universal ribosomal protein uS7 family. Part of the 30S ribosomal subunit. Contacts proteins S9 and S11.

Its function is as follows. One of the primary rRNA binding proteins, it binds directly to 16S rRNA where it nucleates assembly of the head domain of the 30S subunit. Is located at the subunit interface close to the decoding center, probably blocks exit of the E-site tRNA. This is Small ribosomal subunit protein uS7 from Borreliella burgdorferi (strain ATCC 35210 / DSM 4680 / CIP 102532 / B31) (Borrelia burgdorferi).